A 456-amino-acid polypeptide reads, in one-letter code: ATP synthase subunit beta (456 aa).

135–142 (GGAGVGKT) serves as a coordination point for ATP.

Belongs to the ATPase alpha/beta chains family. In terms of assembly, F-type ATPases have 2 components, CF(1) - the catalytic core - and CF(0) - the membrane proton channel. CF(1) has five subunits: alpha(3), beta(3), gamma(1), delta(1), epsilon(1). CF(0) has four main subunits: a(1), b(1), b'(1) and c(9-12).

It localises to the cellular thylakoid membrane. The enzyme catalyses ATP + H2O + 4 H(+)(in) = ADP + phosphate + 5 H(+)(out). Functionally, produces ATP from ADP in the presence of a proton gradient across the membrane. The catalytic sites are hosted primarily by the beta subunits. This chain is ATP synthase subunit beta (atpD), found in Acaryochloris marina (strain MBIC 11017).